The primary structure comprises 476 residues: Probable cytosolic Fe-S cluster assembly factor GI11683 (476 aa).

Positions 23, 68, 71, 74, 187, 243, 395, and 399 each coordinate [4Fe-4S] cluster.

Belongs to the NARF family.

In terms of biological role, component of the cytosolic iron-sulfur (Fe/S) protein assembly machinery. Required for maturation of extramitochondrial Fe/S proteins. This Drosophila mojavensis (Fruit fly) protein is Probable cytosolic Fe-S cluster assembly factor GI11683.